The primary structure comprises 331 residues: Small ribosomal subunit protein uS2 (331 aa).

It belongs to the universal ribosomal protein uS2 family.

This is Small ribosomal subunit protein uS2 from Rhodopseudomonas palustris (strain HaA2).